Consider the following 178-residue polypeptide: Large ribosomal subunit protein uL6 (178 aa).

This sequence belongs to the universal ribosomal protein uL6 family. In terms of assembly, part of the 50S ribosomal subunit.

Functionally, this protein binds to the 23S rRNA, and is important in its secondary structure. It is located near the subunit interface in the base of the L7/L12 stalk, and near the tRNA binding site of the peptidyltransferase center. The sequence is that of Large ribosomal subunit protein uL6 from Natranaerobius thermophilus (strain ATCC BAA-1301 / DSM 18059 / JW/NM-WN-LF).